The sequence spans 313 residues: Ribosomal RNA small subunit methyltransferase H (313 aa).

Residues 33–35, Asp53, Phe82, Asp103, and Gln110 contribute to the S-adenosyl-L-methionine site; that span reads AGH.

The protein belongs to the methyltransferase superfamily. RsmH family.

It localises to the cytoplasm. It carries out the reaction cytidine(1402) in 16S rRNA + S-adenosyl-L-methionine = N(4)-methylcytidine(1402) in 16S rRNA + S-adenosyl-L-homocysteine + H(+). Functionally, specifically methylates the N4 position of cytidine in position 1402 (C1402) of 16S rRNA. The polypeptide is Ribosomal RNA small subunit methyltransferase H (Ruminiclostridium cellulolyticum (strain ATCC 35319 / DSM 5812 / JCM 6584 / H10) (Clostridium cellulolyticum)).